A 180-amino-acid polypeptide reads, in one-letter code: NAD(P)H-quinone oxidoreductase subunit I, chloroplastic (180 aa).

4Fe-4S ferredoxin-type domains are found at residues 55-84 and 95-124; these read GRIH…VHWR and LNYS…MTEE. Residues Cys64, Cys67, Cys70, Cys74, Cys104, Cys107, Cys110, and Cys114 each coordinate [4Fe-4S] cluster.

Belongs to the complex I 23 kDa subunit family. In terms of assembly, NDH is composed of at least 16 different subunits, 5 of which are encoded in the nucleus. It depends on [4Fe-4S] cluster as a cofactor.

It localises to the plastid. It is found in the chloroplast thylakoid membrane. The catalysed reaction is a plastoquinone + NADH + (n+1) H(+)(in) = a plastoquinol + NAD(+) + n H(+)(out). It carries out the reaction a plastoquinone + NADPH + (n+1) H(+)(in) = a plastoquinol + NADP(+) + n H(+)(out). In terms of biological role, NDH shuttles electrons from NAD(P)H:plastoquinone, via FMN and iron-sulfur (Fe-S) centers, to quinones in the photosynthetic chain and possibly in a chloroplast respiratory chain. The immediate electron acceptor for the enzyme in this species is believed to be plastoquinone. Couples the redox reaction to proton translocation, and thus conserves the redox energy in a proton gradient. This is NAD(P)H-quinone oxidoreductase subunit I, chloroplastic from Calycanthus floridus var. glaucus (Eastern sweetshrub).